A 165-amino-acid polypeptide reads, in one-letter code: Small ribosomal subunit protein uS5 (165 aa).

The S5 DRBM domain occupies 13–76 (LEEKVLVVNR…EAARKNLITI (64 aa)).

It belongs to the universal ribosomal protein uS5 family. As to quaternary structure, part of the 30S ribosomal subunit. Contacts proteins S4 and S8.

With S4 and S12 plays an important role in translational accuracy. In terms of biological role, located at the back of the 30S subunit body where it stabilizes the conformation of the head with respect to the body. The polypeptide is Small ribosomal subunit protein uS5 (Chlamydia abortus (strain DSM 27085 / S26/3) (Chlamydophila abortus)).